Reading from the N-terminus, the 1693-residue chain is 1-phosphatidylinositol 4,5-bisphosphate phosphodiesterase eta-1 (1693 aa).

The region spanning 20-128 (SVMQSGTQMI…WITGLKYLMA (109 aa)) is the PH domain. EF-hand domains follow at residues 142 to 177 (THDQ…LNVN), 178 to 214 (LPRR…MSLR), and 226 to 246 (DKKD…EQKM). The Ca(2+) site is built by Asp-155, Asn-157, Asp-159, and Glu-166. Residues 299–444 (QDMDQPLCNY…LKGKILVKGK (146 aa)) enclose the PI-PLC X-box domain. His-314 is an active-site residue. Residues Asn-315, Glu-344, and Asp-346 each coordinate Ca(2+). Residue His-358 is part of the active site. A Ca(2+)-binding site is contributed by Glu-393. 2 residues coordinate substrate: Lys-442 and Lys-444. The interval 526–585 (LNAHLKQSPDVKESGKKSHGRSLMTNFGKHKKTTKSRSKSYSTDDEEDTQQSTGKEGGQL) is disordered. The segment covering 532 to 541 (QSPDVKESGK) has biased composition (basic and acidic residues). Basic residues predominate over residues 553–563 (GKHKKTTKSRS). In terms of domain architecture, PI-PLC Y-box spans 601 to 714 (LSDLVVYTNS…GYVLKPQQMC (114 aa)). 2 residues coordinate substrate: Ser-627 and Arg-654. The region spanning 715–843 (KGTFNPFSGD…PGYRHVYLEG (129 aa)) is the C2 domain. Ca(2+)-binding residues include Ile-758, Asp-760, Asp-784, Asp-813, His-814, and Asp-815. A compositionally biased stretch (basic and acidic residues) spans 992 to 1005 (IEGKENSLAEDKDG). 4 disordered regions span residues 992-1014 (IEGK…ASIK), 1052-1089 (TGEQ…PKQH), 1300-1329 (LESN…ETLK), and 1578-1613 (LSSR…GAGV). Polar residues predominate over residues 1065–1086 (RTTSNATSNCQENPCPSKSLSP). Positions 1592–1601 (RAKEKQEANK) are enriched in basic and acidic residues.

The cofactor is Ca(2+). In terms of tissue distribution, expressed in brain and to a lower extent in lung. In brain, it is found in cerebrum, cerebellum and spinal cord. In embryo expressed in the notochord, developing spinal cord (in a ventral to dorsal gradient), dorsal root ganglia, cerebellum and dermatomyosome.

The protein localises to the cytoplasm. It is found in the membrane. It carries out the reaction a 1,2-diacyl-sn-glycero-3-phospho-(1D-myo-inositol-4,5-bisphosphate) + H2O = 1D-myo-inositol 1,4,5-trisphosphate + a 1,2-diacyl-sn-glycerol + H(+). Functionally, the production of the second messenger molecules diacylglycerol (DAG) and inositol 1,4,5-trisphosphate (IP3) is mediated by calcium-activated phosphatidylinositol-specific phospholipase C enzymes. The protein is 1-phosphatidylinositol 4,5-bisphosphate phosphodiesterase eta-1 of Homo sapiens (Human).